The following is a 284-amino-acid chain: Homeobox protein CDX-4 (284 aa).

Disordered regions lie at residues 15–40 (PGTLMSPGGDGTAGTGGTGGGGSPMP) and 120–155 (GGGTSGSSLPGQAGGSLVPTDAGAAKASSPSRSRHS). A compositionally biased stretch (gly residues) spans 22-37 (GGDGTAGTGGTGGGGS). The homeobox DNA-binding region spans 173-232 (KEKYRVVYTDHQRLELEKEFHCNRYITIQRKSELAVNLGLSERQVKIWFQNRRAKERKMI). A compositionally biased stretch (polar residues) spans 238 to 253 (QFENSGGSVQSDSDSI). A disordered region spans residues 238 to 259 (QFENSGGSVQSDSDSISPGELP).

This sequence belongs to the Caudal homeobox family.

It localises to the nucleus. The sequence is that of Homeobox protein CDX-4 (CDX4) from Homo sapiens (Human).